The chain runs to 893 residues: TBC domain-containing protein kinase-like protein (893 aa).

Residues 1-273 (MFPLKDAEMG…PDQLMKDKVF (273 aa)) form the Protein kinase domain. Residues 466–651 (DIPPLMRGLT…HLWDTLLLGN (186 aa)) enclose the Rab-GAP TBC domain. The segment at 710-749 (YRQHAQPPKPSSDSSGGRSSAPYFSAECPDPPKTDLSRES) is disordered. The segment covering 720–729 (SSDSSGGRSS) has biased composition (low complexity). A Rhodanese domain is found at 790–889 (SKPKLLVVDI…IKPTGLLTIP (100 aa)).

This sequence belongs to the protein kinase superfamily. Component of the FERRY complex composed of five subunits, TBCK, PPP1R21, FERRY3, CRYZL1 and GATD1 with a ratio of 1:2:1:2:4, respectively.

The protein resides in the cytoplasm. It localises to the cytoskeleton. The protein localises to the spindle. Its subcellular location is the midbody. It is found in the early endosome. Its function is as follows. Component of the FERRY complex (Five-subunit Endosomal Rab5 and RNA/ribosome intermediary). The FERRY complex directly interacts with mRNAs and RAB5A, and functions as a RAB5A effector involved in the localization and the distribution of specific mRNAs most likely by mediating their endosomal transport. The complex recruits mRNAs and ribosomes to early endosomes through direct mRNA-interaction. Also involved in the modulation of mTOR signaling and expression of mTOR complex components. Involved in the control of actin-cytoskeleton organization. The protein is TBC domain-containing protein kinase-like protein of Homo sapiens (Human).